We begin with the raw amino-acid sequence, 264 residues long: Phycocyanobilin:ferredoxin oxidoreductase (264 aa).

This sequence belongs to the HY2 family.

The catalysed reaction is (2R,3Z)-phycocyanobilin + 4 oxidized [2Fe-2S]-[ferredoxin] = biliverdin IXalpha + 4 reduced [2Fe-2S]-[ferredoxin] + 4 H(+). Catalyzes the four-electron reduction of biliverdin IX-alpha (2-electron reduction at both the A and D rings); the reaction proceeds via an isolatable 2-electron intermediate, 181,182-dihydrobiliverdin. The sequence is that of Phycocyanobilin:ferredoxin oxidoreductase (pcyA) from Prochlorococcus marinus (strain MIT 9313).